Consider the following 92-residue polypeptide: uncharacterized protein (92 aa).

Residues 25–83 (LEEKLKQEKIDRKYLAQVTNIPYTTVSRIMRAEANREFNPEIDTILKIAKYFNCTMDEV) form the HTH cro/C1-type domain. The segment at residues 36 to 55 (RKYLAQVTNIPYTTVSRIMR) is a DNA-binding region (H-T-H motif).

This is an uncharacterized protein from Rickettsia prowazekii (strain Madrid E).